A 323-amino-acid polypeptide reads, in one-letter code: NAC transcription factor 25 (323 aa).

The NAC domain maps to 16–177 (LPPGFRFHPT…DWVLCRIYKK (162 aa)). Residues 114-183 (VGVKKALVFY…IYKKNSSQRP (70 aa)) mediate DNA binding. Residues 201-221 (KSSANSSSTSVLDNNDNNNNN) show a composition bias toward low complexity. A disordered region spans residues 201 to 223 (KSSANSSSTSVLDNNDNNNNNNE).

Expressed specifically in the tapetum.

The protein localises to the nucleus. In terms of biological role, transcription factor of the NAC family. May be associated with anther development and pollen production. Required for normal seed development and morphology. The protein is NAC transcription factor 25 (NAC025) of Arabidopsis thaliana (Mouse-ear cress).